Here is a 157-residue protein sequence, read N- to C-terminus: Tuberoinfundibular peptide of 39 residues (157 aa).

The signal sequence occupies residues 1 to 25; the sequence is MALSLPPRPALLFLVLMSVTLMASA. A propeptide spanning residues 26-116 is cleaved from the precursor; the sequence is FPQPQLRPLQ…DWPSRVGHQQ (91 aa).

It belongs to the parathyroid hormone family.

It is found in the secreted. In terms of biological role, plays a role as a potent and selective agonist of pth2r resulting in adenyl cyclase activation and intracellular calcium level elevation. The protein is Tuberoinfundibular peptide of 39 residues of Danio rerio (Zebrafish).